A 288-amino-acid chain; its full sequence is Solute carrier family 25 member 45 (288 aa).

Solcar repeat units follow at residues 1–83, 97–191, and 199–286; these read MPVE…TLLA, PSYT…LCRQ, and PSSA…LLRL. Helical transmembrane passes span 6–26, 58–78, 102–122, 166–186, 202–222, and 266–286; these read FVAG…FDTV, GMSF…GVYS, IFIA…PFDL, GSWA…VTYE, ATVL…ATPF, and SARA…LLRL.

This sequence belongs to the mitochondrial carrier (TC 2.A.29) family. In terms of tissue distribution, widely expressed, with highest levels in testis, liver and kidney and low levels in brain, including cortex, cerebellum, hippocampus and hypothalamus, and heart.

It is found in the mitochondrion inner membrane. The chain is Solute carrier family 25 member 45 (Slc25a45) from Mus musculus (Mouse).